The following is a 480-amino-acid chain: UDP-glucose 6-dehydrogenase 4 (480 aa).

NAD(+) contacts are provided by residues 3–20 (KICC…MAVI), Asp-33, Arg-38, Thr-90, Thr-128, and Glu-161. Substrate is bound by residues 157 to 161 (EFLAE), Lys-216, 216 to 223 (KLAANAFL), 256 to 269 (RIGS…VGFG), and Gly-269. The active-site Nucleophile is Cys-272. An NAD(+)-binding site is contributed by Lys-275. Residues Phe-334 and Lys-335 each coordinate substrate. An NAD(+)-binding site is contributed by Arg-342. Arg-447 is a binding site for substrate.

The protein belongs to the UDP-glucose/GDP-mannose dehydrogenase family.

The enzyme catalyses UDP-alpha-D-glucose + 2 NAD(+) + H2O = UDP-alpha-D-glucuronate + 2 NADH + 3 H(+). The protein operates within nucleotide-sugar biosynthesis; UDP-alpha-D-glucuronate biosynthesis; UDP-alpha-D-glucuronate from UDP-alpha-D-glucose: step 1/1. Its activity is regulated as follows. Inhibited by UDP-xylose. In terms of biological role, involved in the biosynthesis of UDP-glucuronic acid (UDP-GlcA), providing nucleotide sugars for cell-wall polymers. The sequence is that of UDP-glucose 6-dehydrogenase 4 from Arabidopsis thaliana (Mouse-ear cress).